Reading from the N-terminus, the 722-residue chain is MNQDRETLVFNKITKTFQFGRQTVTLETGEIARQASGSVVVSVDDTVVMVSVVGGKNVKPGQDFFPLTVDYLERTYAAGKIPGGFFKREGKQSEKEVLTSRLIDRPIRPLFPEGFYHDVQIVATVLSLNPEVDSDIPAMIGASAALAISGLPFAGPIGAARVGYANGEYILNPTKTELQTSQMDLVVAGTSRAVLMVESEAKELPEAVMLGAVVFGHEQMQAAIKAINELADEVNPVMFDWAAPAKDEALIAQIRGIAGEKLAEAFRLRQKQARTVAINEAWDAVKAGLINEETDTLKANEIKGIFKSLEAEIVRGQILAGEARIDGRDTRTVRPISIRNNVLPRTHGSALFTRGETQALVVATLGTKQDEQIIDALAGEYTERFMLHYNFPPYSTGEAGRMGPPKRREIGHGRLAKRALVAVLPPEDEFGYSMRVVSEITESNGSSSMASVCGGCLSLLSAGVPLKAHVAGIAMGLILEGNRFAVLTDILGDEDHLGDMDFKVAGTAAGVTALQMDIKIQGITKEIMQVALEQAKEGRLHILGLMKEAVDGPQELSAHAPRLYVMKINPEKIREVIGKGGETIRSITKDTGCEINIEEDGTITIASVSSEGAEAAKKRIEEITVEVEVGKVYEGTVVKILDNNVGAIVSILPGKDGLVHISQIANERIKNVSDYLKEGQVVKVKAIEMDDRGRIRLSIKALLEEEAKTAQATADAFGLKTQ.

Residues D495 and D501 each coordinate Mg(2+). In terms of domain architecture, KH spans 561-620; sequence PRLYVMKINPEKIREVIGKGGETIRSITKDTGCEINIEEDGTITIASVSSEGAEAAKKRI. The region spanning 630–700 is the S1 motif domain; sequence GKVYEGTVVK…DRGRIRLSIK (71 aa).

Belongs to the polyribonucleotide nucleotidyltransferase family. Requires Mg(2+) as cofactor.

It is found in the cytoplasm. The catalysed reaction is RNA(n+1) + phosphate = RNA(n) + a ribonucleoside 5'-diphosphate. Its function is as follows. Involved in mRNA degradation. Catalyzes the phosphorolysis of single-stranded polyribonucleotides processively in the 3'- to 5'-direction. The protein is Polyribonucleotide nucleotidyltransferase of Chromobacterium violaceum (strain ATCC 12472 / DSM 30191 / JCM 1249 / CCUG 213 / NBRC 12614 / NCIMB 9131 / NCTC 9757 / MK).